The sequence spans 231 residues: Probable caffeoyl-CoA O-methyltransferase 2 (231 aa).

Residues T53, D75, 77–78 (GV), S83, D101, A130, D152, D154, and Y161 contribute to the S-adenosyl-L-methionine site. D152 contacts a divalent metal cation. The a divalent metal cation site is built by D178 and N179.

Belongs to the class I-like SAM-binding methyltransferase superfamily. Cation-dependent O-methyltransferase family. CCoAMT subfamily.

The catalysed reaction is (E)-caffeoyl-CoA + S-adenosyl-L-methionine = (E)-feruloyl-CoA + S-adenosyl-L-homocysteine + H(+). The protein is Probable caffeoyl-CoA O-methyltransferase 2 (omt6) of Dictyostelium discoideum (Social amoeba).